Reading from the N-terminus, the 268-residue chain is Interleukin-1 alpha (268 aa).

Residues 1 to 112 (MAKVPDLFED…NTEEEIIKPR (112 aa)) constitute a propeptide that is removed on maturation. Lysine 82 carries the post-translational modification N6-acetyllysine. The segment at 82–86 (KKRRL) is nuclear localization signal (NLS). The residue at position 87 (serine 87) is a Phosphoserine. Asparagine 102 and asparagine 141 each carry an N-linked (GlcNAc...) asparagine glycan.

The protein belongs to the IL-1 family. Monomer. Interacts with TMED10; the interaction mediates the translocation from the cytoplasm into the ERGIC (endoplasmic reticulum-Golgi intermediate compartment) and thereby secretion. Interacts with IL1R1. Interacts with S100A13; this interaction is the first step in the export of IL1A, followed by direct translocation of this complex across the plasma membrane. Post-translationally, acetylated within its nuclear localization sequence, which impacts subcellular localization. In terms of processing, proteolytic processed by CAPN1 in a calcium-dependent manner. Cleavage from 31 kDa precursor to 18 kDa biologically active molecules. Phosphorylated. Phosphorylation greatly enhances susceptibility to digestion and promotes the conversion of pre-IL1A alpha to the biologically active IL1A.

The protein resides in the nucleus. The protein localises to the cytoplasm. It is found in the secreted. In terms of biological role, cytokine constitutively present intracellularly in nearly all resting non-hematopoietic cells that plays an important role in inflammation and bridges the innate and adaptive immune systems. After binding to its receptor IL1R1 together with its accessory protein IL1RAP, forms the high affinity interleukin-1 receptor complex. Signaling involves the recruitment of adapter molecules such as MYD88, IRAK1 or IRAK4. In turn, mediates the activation of NF-kappa-B and the three MAPK pathways p38, p42/p44 and JNK pathways. Within the cell, acts as an alarmin and cell death results in its liberation in the extracellular space after disruption of the cell membrane to induce inflammation and alert the host to injury or damage. In addition to its role as a danger signal, which occurs when the cytokine is passively released by cell necrosis, directly senses DNA damage and acts as signal for genotoxic stress without loss of cell integrity. In Bos taurus (Bovine), this protein is Interleukin-1 alpha (IL1A).